Reading from the N-terminus, the 404-residue chain is NADH-quinone oxidoreductase subunit D (404 aa).

The protein belongs to the complex I 49 kDa subunit family. NDH-1 is composed of 14 different subunits. Subunits NuoB, C, D, E, F, and G constitute the peripheral sector of the complex.

It is found in the cell inner membrane. It carries out the reaction a quinone + NADH + 5 H(+)(in) = a quinol + NAD(+) + 4 H(+)(out). Functionally, NDH-1 shuttles electrons from NADH, via FMN and iron-sulfur (Fe-S) centers, to quinones in the respiratory chain. The immediate electron acceptor for the enzyme in this species is believed to be ubiquinone. Couples the redox reaction to proton translocation (for every two electrons transferred, four hydrogen ions are translocated across the cytoplasmic membrane), and thus conserves the redox energy in a proton gradient. This Leptospira borgpetersenii serovar Hardjo-bovis (strain JB197) protein is NADH-quinone oxidoreductase subunit D.